The sequence spans 198 residues: NAD(P)H dehydrogenase (quinone) (198 aa).

Residues 4–189 (ILVLYYSMYG…SIARYQGEYV (186 aa)) enclose the Flavodoxin-like domain. FMN-binding positions include 10 to 15 (SMYGHI) and 78 to 80 (TRF). NAD(+) is bound at residue tyrosine 12. Residue tryptophan 98 coordinates substrate. Residues 113 to 118 (STGTGG) and histidine 133 each bind FMN.

The protein belongs to the WrbA family. The cofactor is FMN.

The catalysed reaction is a quinone + NADH + H(+) = a quinol + NAD(+). It catalyses the reaction a quinone + NADPH + H(+) = a quinol + NADP(+). This Salmonella typhi protein is NAD(P)H dehydrogenase (quinone).